Consider the following 367-residue polypeptide: AdoMet-dependent heme synthase (367 aa).

Positions 15–238 constitute a Radical SAM core domain; that stretch reads DGSPTCKLIA…TSMHLKATCA (224 aa). [4Fe-4S] cluster is bound by residues Cys-31, Cys-35, and Cys-38.

The protein belongs to the radical SAM superfamily. The cofactor is [4Fe-4S] cluster.

It catalyses the reaction Fe-coproporphyrin III + 2 S-adenosyl-L-methionine = heme b + 2 5'-deoxyadenosine + 2 L-methionine + 2 CO2. It functions in the pathway porphyrin-containing compound metabolism; protoheme biosynthesis. Its function is as follows. Involved in siroheme-dependent heme b biosynthesis. Catalyzes the conversion of Fe-coproporphyrin III into heme by the oxidative decarboxylation of two propionate side chains. This Nitratidesulfovibrio vulgaris (strain ATCC 29579 / DSM 644 / CCUG 34227 / NCIMB 8303 / VKM B-1760 / Hildenborough) (Desulfovibrio vulgaris) protein is AdoMet-dependent heme synthase.